The sequence spans 60 residues: MNDYKLYQCAQCGFEYDEAVGWPEDGIEPGTRWDDIPEDWSCPDCGAAKSDFFMVEVERR.

In terms of domain architecture, Rubredoxin-like spans 4–55 (YKLYQCAQCGFEYDEAVGWPEDGIEPGTRWDDIPEDWSCPDCGAAKSDFFMV). Fe cation contacts are provided by Cys-9, Cys-12, Cys-42, and Cys-45.

Belongs to the rubredoxin family. The cofactor is Fe(3+).

In terms of biological role, involved in the hydrocarbon hydroxylating system, which transfers electrons from NADH to rubredoxin reductase and then through rubredoxin to alkane 1 monooxygenase. This is Rubredoxin 4 (rubA4) from Rhodococcus sp. (strain Q15).